A 283-amino-acid polypeptide reads, in one-letter code: NFU1 iron-sulfur cluster scaffold homolog, mitochondrial (283 aa).

A mitochondrion-targeting transit peptide spans 1–30 (MSKFLSQAALNTLRNTRLGSRQLVRSFAGI). A nifU region spans residues 182 to 250 (IKELLDTRIR…IPEVESVEQV (69 aa)). [4Fe-4S] cluster contacts are provided by Cys219 and Cys222.

Belongs to the NifU family.

The protein localises to the mitochondrion. Its function is as follows. Molecular scaffold for [Fe-S] cluster assembly of mitochondrial iron-sulfur proteins. The protein is NFU1 iron-sulfur cluster scaffold homolog, mitochondrial of Drosophila erecta (Fruit fly).